The chain runs to 118 residues: Holo-[acyl-carrier-protein] synthase (118 aa).

The Mg(2+) site is built by Asp8 and Glu58.

The protein belongs to the P-Pant transferase superfamily. AcpS family. Mg(2+) is required as a cofactor.

The protein resides in the cytoplasm. It carries out the reaction apo-[ACP] + CoA = holo-[ACP] + adenosine 3',5'-bisphosphate + H(+). Transfers the 4'-phosphopantetheine moiety from coenzyme A to a Ser of acyl-carrier-protein. In Streptococcus equi subsp. zooepidemicus (strain MGCS10565), this protein is Holo-[acyl-carrier-protein] synthase.